A 1400-amino-acid polypeptide reads, in one-letter code: DNA-directed RNA polymerase subunit beta' (1400 aa).

4 residues coordinate Zn(2+): C71, C73, C86, and C89. Residues D462, D464, and D466 each contribute to the Mg(2+) site. Zn(2+)-binding residues include C811, C885, C892, and C895.

This sequence belongs to the RNA polymerase beta' chain family. As to quaternary structure, the RNAP catalytic core consists of 2 alpha, 1 beta, 1 beta' and 1 omega subunit. When a sigma factor is associated with the core the holoenzyme is formed, which can initiate transcription. Requires Mg(2+) as cofactor. It depends on Zn(2+) as a cofactor.

It carries out the reaction RNA(n) + a ribonucleoside 5'-triphosphate = RNA(n+1) + diphosphate. Its function is as follows. DNA-dependent RNA polymerase catalyzes the transcription of DNA into RNA using the four ribonucleoside triphosphates as substrates. This is DNA-directed RNA polymerase subunit beta' from Brucella anthropi (strain ATCC 49188 / DSM 6882 / CCUG 24695 / JCM 21032 / LMG 3331 / NBRC 15819 / NCTC 12168 / Alc 37) (Ochrobactrum anthropi).